A 201-amino-acid polypeptide reads, in one-letter code: Superoxide dismutase [Mn] (201 aa).

The Mn(2+) site is built by H27, H81, D163, and H167.

The protein belongs to the iron/manganese superoxide dismutase family. In terms of assembly, homodimer. The cofactor is Mn(2+).

Its subcellular location is the secreted. It catalyses the reaction 2 superoxide + 2 H(+) = H2O2 + O2. Functionally, destroys superoxide anion radicals which are normally produced within the cells and which are toxic to biological systems. This chain is Superoxide dismutase [Mn] (sodA), found in Streptococcus pyogenes serotype M18 (strain MGAS8232).